The sequence spans 584 residues: ATP-dependent RNA helicase MRH4, mitochondrial (584 aa).

Residues 1-49 (MQPVFSRFPYASKSGFISLASRGYAVSRNSGSSIKSNLRSKPRADTRWN) constitute a mitochondrion transit peptide. The segment covering 28–39 (RNSGSSIKSNLR) has biased composition (polar residues). The segment at 28-92 (RNSGSSIKSN…QTQQQFQYGE (65 aa)) is disordered. Residues 63–79 (GKGDHRSHSRSDSRAKP) show a composition bias toward basic and acidic residues. Positions 162–169 (HLKPSPIQ) match the Q motif motif. In terms of domain architecture, Helicase ATP-binding spans 179-366 (TLMDPQLQVR…TRLFPTVGVI (188 aa)). 192 to 199 (AETGSGKT) serves as a coordination point for ATP. Positions 314–317 (DEAD) match the DEAD box motif. The Helicase C-terminal domain occupies 397–584 (ALAQILYSIN…SIVSKNVSIS (188 aa)).

The protein belongs to the DEAD box helicase family. MRH4 subfamily.

The protein localises to the mitochondrion. The catalysed reaction is ATP + H2O = ADP + phosphate + H(+). ATP-binding RNA helicase involved in mitochondrial RNA metabolism. Required for maintenance of mitochondrial DNA. The protein is ATP-dependent RNA helicase MRH4, mitochondrial (MRH4) of Kluyveromyces lactis (strain ATCC 8585 / CBS 2359 / DSM 70799 / NBRC 1267 / NRRL Y-1140 / WM37) (Yeast).